The primary structure comprises 126 residues: uncharacterized protein (126 aa).

Residues 1-101 (MQASSEPANV…KSVGSQSADE (101 aa)) form a disordered region. Polar residues-rich tracts occupy residues 14-27 (GQNQ…STSP) and 86-99 (DTEA…SQSA).

This is an uncharacterized protein from Schizosaccharomyces pombe (strain 972 / ATCC 24843) (Fission yeast).